The sequence spans 251 residues: Large ribosomal subunit protein uL16m (251 aa).

Residues 1-29 constitute a mitochondrion transit peptide; the sequence is MWRLLARASAPLLRVPLSDSWALLPASAG.

The protein belongs to the universal ribosomal protein uL16 family. In terms of assembly, component of the mitochondrial large ribosomal subunit (mt-LSU). Mature mammalian 55S mitochondrial ribosomes consist of a small (28S) and a large (39S) subunit. The 28S small subunit contains a 12S ribosomal RNA (12S mt-rRNA) and 30 different proteins. The 39S large subunit contains a 16S rRNA (16S mt-rRNA), a copy of mitochondrial valine transfer RNA (mt-tRNA(Val)), which plays an integral structural role, and 52 different proteins.

It localises to the mitochondrion. The chain is Large ribosomal subunit protein uL16m (MRPL16) from Homo sapiens (Human).